A 400-amino-acid chain; its full sequence is Dual specificity mitogen-activated protein kinase kinase 2 (400 aa).

Residue methionine 1 is modified to N-acetylmethionine. Serine 23 carries the phosphoserine modification. A Protein kinase domain is found at 72-369 (FERISELGAG…LKMLTNHTFI (298 aa)). ATP is bound by residues 78-86 (LGAGNGGVV) and lysine 101. Aspartate 194 functions as the Proton acceptor in the catalytic mechanism. Serine 222 and serine 226 each carry (Microbial infection) O-acetylserine; by Yersinia YopJ; alternate. Serine 222 carries the post-translational modification Phosphoserine; by RAF; alternate. Position 226 is a phosphoserine; alternate (serine 226). The interval 286 to 310 (GEEGEPHSISPRPRPPGRPVSGHGM) is disordered. 3 positions are modified to phosphoserine: serine 293, serine 295, and serine 306. Phosphothreonine is present on residues threonine 394 and threonine 396.

The protein belongs to the protein kinase superfamily. STE Ser/Thr protein kinase family. MAP kinase kinase subfamily. As to quaternary structure, interacts with MORG1. Interacts with SGK1. Interacts with KSR1. Interacts with KSR1 and BRAF; the interaction with KSR1 mediates KSR1-BRAF dimerization. Interacts with GLS. Mg(2+) serves as cofactor. In terms of processing, MAPKK is itself dependent on Ser/Thr phosphorylation for activity catalyzed by MAP kinase kinase kinases (RAF or MEKK1). Phosphorylated by MAP2K1/MEK1. (Microbial infection) Acetylation of Ser-222 and Ser-226 by Yersinia YopJ prevents phosphorylation and activation, thus blocking the MAPK signaling pathway.

The protein resides in the cytoplasm. The protein localises to the membrane. It carries out the reaction L-seryl-[protein] + ATP = O-phospho-L-seryl-[protein] + ADP + H(+). The enzyme catalyses L-threonyl-[protein] + ATP = O-phospho-L-threonyl-[protein] + ADP + H(+). The catalysed reaction is L-tyrosyl-[protein] + ATP = O-phospho-L-tyrosyl-[protein] + ADP + H(+). Functionally, catalyzes the concomitant phosphorylation of a threonine and a tyrosine residue in a Thr-Glu-Tyr sequence located in MAP kinases. Activates the ERK1 and ERK2 MAP kinases. Activates BRAF in a KSR1 or KSR2-dependent manner; by binding to KSR1 or KSR2 releases the inhibitory intramolecular interaction between KSR1 or KSR2 protein kinase and N-terminal domains which promotes KSR1 or KSR2-BRAF dimerization and BRAF activation. The polypeptide is Dual specificity mitogen-activated protein kinase kinase 2 (MAP2K2) (Homo sapiens (Human)).